Here is a 355-residue protein sequence, read N- to C-terminus: 3-dehydroquinate synthase (355 aa).

NAD(+) contacts are provided by residues 71–76 (EGEERK), 105–109 (GVVGD), 129–130 (TS), Lys-142, and Lys-151. The Zn(2+) site is built by Glu-184, His-246, and His-263.

Belongs to the sugar phosphate cyclases superfamily. Dehydroquinate synthase family. Co(2+) is required as a cofactor. Requires Zn(2+) as cofactor. The cofactor is NAD(+).

It localises to the cytoplasm. The enzyme catalyses 7-phospho-2-dehydro-3-deoxy-D-arabino-heptonate = 3-dehydroquinate + phosphate. It participates in metabolic intermediate biosynthesis; chorismate biosynthesis; chorismate from D-erythrose 4-phosphate and phosphoenolpyruvate: step 2/7. Its function is as follows. Catalyzes the conversion of 3-deoxy-D-arabino-heptulosonate 7-phosphate (DAHP) to dehydroquinate (DHQ). This Streptococcus pneumoniae serotype 19F (strain G54) protein is 3-dehydroquinate synthase.